Here is a 397-residue protein sequence, read N- to C-terminus: Protein ROH1D (397 aa).

Residues 247 to 267 (LIVPVYTMTTVLLFVMWALVA) form a helical membrane-spanning segment.

It belongs to the ROH1 family. In terms of assembly, interacts with EXO70C2. Mostly expressed in mature pollen.

It is found in the membrane. It localises to the cytoplasm. The protein resides in the cytosol. Its function is as follows. Involved in the regulation of plant growth, and modulates pollen development to ensure male fertility. May also affect the composition of the inner seed coat mucilage layer. This Arabidopsis thaliana (Mouse-ear cress) protein is Protein ROH1D.